We begin with the raw amino-acid sequence, 475 residues long: Crocetin glucosyltransferase 3 (475 aa).

Histidine 16 serves as the catalytic Proton acceptor. An an anthocyanidin-binding site is contributed by histidine 16. Aspartate 123 (charge relay) is an active-site residue. Threonine 144, alanine 354, glutamine 356, histidine 371, tryptophan 374, asparagine 375, serine 376, and glutamate 379 together coordinate UDP-alpha-D-glucose. An an anthocyanidin-binding site is contributed by alanine 394. 2 residues coordinate UDP-alpha-D-glucose: glutamate 395 and glutamine 396.

The protein belongs to the UDP-glycosyltransferase family. Mainly expressed in stamens.

The enzyme catalyses crocetin + UDP-alpha-D-glucose = beta-D-glucosyl crocetin + UDP. The catalysed reaction is beta-D-glucosyl crocetin + UDP-alpha-D-glucose = bis(beta-D-glucosyl) crocetin + UDP. It carries out the reaction beta-D-gentiobiosyl crocetin + UDP-alpha-D-glucose = beta-D-gentiobiosyl beta-D-glucosyl crocetin + UDP. Its function is as follows. Crocetin glucosyltransferase involved in the synthesis of crocin, one of the apocarotenoids responsible for the color and bitter taste of saffron. This is Crocetin glucosyltransferase 3 (GLT3) from Crocus sativus (Saffron).